The sequence spans 300 residues: 33 kDa chaperonin (300 aa).

Intrachain disulfides connect C247–C249 and C280–C283.

It belongs to the HSP33 family. Under oxidizing conditions two disulfide bonds are formed involving the reactive cysteines. Under reducing conditions zinc is bound to the reactive cysteines and the protein is inactive.

Its subcellular location is the cytoplasm. Redox regulated molecular chaperone. Protects both thermally unfolding and oxidatively damaged proteins from irreversible aggregation. Plays an important role in the bacterial defense system toward oxidative stress. The polypeptide is 33 kDa chaperonin (Prochlorococcus marinus (strain MIT 9515)).